Consider the following 309-residue polypeptide: 4-hydroxy-3-methylbut-2-enyl diphosphate reductase (309 aa).

Residue cysteine 12 participates in [4Fe-4S] cluster binding. The (2E)-4-hydroxy-3-methylbut-2-enyl diphosphate site is built by histidine 41 and histidine 74. Residues histidine 41 and histidine 74 each contribute to the dimethylallyl diphosphate site. Residues histidine 41 and histidine 74 each contribute to the isopentenyl diphosphate site. Position 96 (cysteine 96) interacts with [4Fe-4S] cluster. A (2E)-4-hydroxy-3-methylbut-2-enyl diphosphate-binding site is contributed by histidine 124. Residue histidine 124 participates in dimethylallyl diphosphate binding. An isopentenyl diphosphate-binding site is contributed by histidine 124. Glutamate 126 functions as the Proton donor in the catalytic mechanism. Threonine 167 is a binding site for (2E)-4-hydroxy-3-methylbut-2-enyl diphosphate. Residue cysteine 197 coordinates [4Fe-4S] cluster. Residues serine 225, serine 226, asparagine 227, and serine 269 each contribute to the (2E)-4-hydroxy-3-methylbut-2-enyl diphosphate site. Residues serine 225, serine 226, asparagine 227, and serine 269 each contribute to the dimethylallyl diphosphate site. 4 residues coordinate isopentenyl diphosphate: serine 225, serine 226, asparagine 227, and serine 269.

It belongs to the IspH family. [4Fe-4S] cluster is required as a cofactor.

It catalyses the reaction isopentenyl diphosphate + 2 oxidized [2Fe-2S]-[ferredoxin] + H2O = (2E)-4-hydroxy-3-methylbut-2-enyl diphosphate + 2 reduced [2Fe-2S]-[ferredoxin] + 2 H(+). The enzyme catalyses dimethylallyl diphosphate + 2 oxidized [2Fe-2S]-[ferredoxin] + H2O = (2E)-4-hydroxy-3-methylbut-2-enyl diphosphate + 2 reduced [2Fe-2S]-[ferredoxin] + 2 H(+). It participates in isoprenoid biosynthesis; dimethylallyl diphosphate biosynthesis; dimethylallyl diphosphate from (2E)-4-hydroxy-3-methylbutenyl diphosphate: step 1/1. The protein operates within isoprenoid biosynthesis; isopentenyl diphosphate biosynthesis via DXP pathway; isopentenyl diphosphate from 1-deoxy-D-xylulose 5-phosphate: step 6/6. Catalyzes the conversion of 1-hydroxy-2-methyl-2-(E)-butenyl 4-diphosphate (HMBPP) into a mixture of isopentenyl diphosphate (IPP) and dimethylallyl diphosphate (DMAPP). Acts in the terminal step of the DOXP/MEP pathway for isoprenoid precursor biosynthesis. The polypeptide is 4-hydroxy-3-methylbut-2-enyl diphosphate reductase (Shewanella halifaxensis (strain HAW-EB4)).